A 37-amino-acid polypeptide reads, in one-letter code: Large ribosomal subunit protein bL36c (37 aa).

The protein belongs to the bacterial ribosomal protein bL36 family.

It localises to the plastid. Its subcellular location is the chloroplast. The sequence is that of Large ribosomal subunit protein bL36c from Populus alba (White poplar).